A 452-amino-acid polypeptide reads, in one-letter code: Isocitrate dehydrogenase [NADP], mitochondrial (452 aa).

A mitochondrion-targeting transit peptide spans 1–39 (MAGYLRVVRSLCRASGSGSAWAPAALTAPNLQEQPRRHY). N6-acetyllysine occurs at positions 45, 48, 67, and 69. An N6-acetyllysine; alternate mark is found at Lys80 and Lys106. Residues Lys80 and Lys106 each carry the N6-succinyllysine; alternate modification. NADP(+) is bound by residues 115–117 (TIT) and Arg122. Thr117 contacts D-threo-isocitrate. Residues 134 to 140 (SPNGTIR) and Arg149 each bind D-threo-isocitrate. Lys155 carries the post-translational modification N6-acetyllysine. Lys166 carries the post-translational modification N6-acetyllysine; alternate. Lys166 carries the N6-succinyllysine; alternate modification. Residue Arg172 participates in D-threo-isocitrate binding. Residues Lys180 and Lys193 each carry the N6-acetyllysine; alternate modification. An N6-succinyllysine; alternate mark is found at Lys180 and Lys193. Residue Lys199 is modified to N6-acetyllysine. Residue Lys256 is modified to N6-acetyllysine; alternate. Lys256 carries the post-translational modification N6-succinyllysine; alternate. Lys263, Lys272, Lys275, and Lys280 each carry N6-acetyllysine. Lys282 is modified (N6-acetyllysine; alternate). Lys282 is modified (N6-succinyllysine; alternate). Asp291 serves as a coordination point for Mn(2+). Position 299 (Lys299) interacts with NADP(+). Asp314 provides a ligand contact to Mn(2+). NADP(+) contacts are provided by residues 349 to 354 (GTVTRH) and Asn367. Lys384 bears the N6-acetyllysine; alternate mark. Residue Lys384 is modified to N6-succinyllysine; alternate. N6-acetyllysine is present on residues Lys400, Lys413, and Lys442.

The protein belongs to the isocitrate and isopropylmalate dehydrogenases family. As to quaternary structure, homodimer. Requires Mg(2+) as cofactor. The cofactor is Mn(2+). Acetylation at Lys-413 dramatically reduces catalytic activity. Deacetylated by SIRT3.

The protein localises to the mitochondrion. It catalyses the reaction D-threo-isocitrate + NADP(+) = 2-oxoglutarate + CO2 + NADPH. Its function is as follows. Plays a role in intermediary metabolism and energy production. It may tightly associate or interact with the pyruvate dehydrogenase complex. The polypeptide is Isocitrate dehydrogenase [NADP], mitochondrial (IDH2) (Bos taurus (Bovine)).